Reading from the N-terminus, the 68-residue chain is uncharacterized protein (68 aa).

Residues 2-67 form the HMA domain; sequence KTITLNIKGI…VIEDAGFDAT (66 aa). The a metal cation site is built by Cys-13 and Cys-16.

This is an uncharacterized protein from Haemophilus influenzae (strain ATCC 51907 / DSM 11121 / KW20 / Rd).